Reading from the N-terminus, the 308-residue chain is Probable GTP 3',8-cyclase (308 aa).

Residues 4-224 form the Radical SAM core domain; the sequence is RFGRPLEDLR…QIRKKHFRPR (221 aa). Residue Arg13 coordinates GTP. [4Fe-4S] cluster-binding residues include Cys20, Cys24, and Cys27. A GTP-binding site is contributed by Lys60. An S-adenosyl-L-methionine-binding site is contributed by Gly64. GTP is bound at residue Thr90. Position 114 (Ser114) interacts with S-adenosyl-L-methionine. Residue Lys151 coordinates GTP. Positions 245 and 248 each coordinate [4Fe-4S] cluster. 250–252 is a binding site for GTP; sequence RIR. Residue Cys262 coordinates [4Fe-4S] cluster.

This sequence belongs to the radical SAM superfamily. MoaA family. [4Fe-4S] cluster serves as cofactor.

The catalysed reaction is GTP + AH2 + S-adenosyl-L-methionine = (8S)-3',8-cyclo-7,8-dihydroguanosine 5'-triphosphate + 5'-deoxyadenosine + L-methionine + A + H(+). It functions in the pathway cofactor biosynthesis; molybdopterin biosynthesis. Functionally, catalyzes the cyclization of GTP to (8S)-3',8-cyclo-7,8-dihydroguanosine 5'-triphosphate. The polypeptide is Probable GTP 3',8-cyclase (Saccharolobus islandicus (strain L.S.2.15 / Lassen #1) (Sulfolobus islandicus)).